A 348-amino-acid chain; its full sequence is Flagellar P-ring protein (348 aa).

A signal peptide spans 1–16 (MRVLTIFLLFMTSIFA).

The protein belongs to the FlgI family. As to quaternary structure, the basal body constitutes a major portion of the flagellar organelle and consists of four rings (L,P,S, and M) mounted on a central rod.

It is found in the periplasm. The protein localises to the bacterial flagellum basal body. Its function is as follows. Assembles around the rod to form the L-ring and probably protects the motor/basal body from shearing forces during rotation. The sequence is that of Flagellar P-ring protein from Campylobacter jejuni subsp. jejuni serotype O:6 (strain 81116 / NCTC 11828).